The following is a 255-amino-acid chain: Ribonuclease HII (255 aa).

The RNase H type-2 domain occupies 72–255 (AIICGIDEVG…KSFEPIKSLL (184 aa)). A divalent metal cation contacts are provided by aspartate 78, glutamate 79, and aspartate 170.

The protein belongs to the RNase HII family. The cofactor is Mn(2+). It depends on Mg(2+) as a cofactor.

It is found in the cytoplasm. It carries out the reaction Endonucleolytic cleavage to 5'-phosphomonoester.. Functionally, endonuclease that specifically degrades the RNA of RNA-DNA hybrids. The sequence is that of Ribonuclease HII from Staphylococcus aureus (strain MRSA252).